We begin with the raw amino-acid sequence, 293 residues long: uncharacterized protein (293 aa).

2 disordered regions span residues 1–95 and 268–293; these read MFLR…KDKA and EETADWESEGQGKEAKEQTEGPGRAL. A phosphoserine mark is found at S34, S35, and S89. 2 stretches are compositionally biased toward basic and acidic residues: residues 85 to 95 and 277 to 286; these read KRMDSLKKDKA and GQGKEAKEQT.

This is an uncharacterized protein from Rattus norvegicus (Rat).